The sequence spans 434 residues: Putative F-box/FBD/LRR-repeat protein At1g16940 (434 aa).

The F-box domain occupies 10–66; the sequence is HNIINQLPDSLLCEIFFNLPTEEVVKTSLICRRWRYVWQSLPGLDLVINGSKNYDKF. LRR repeat units lie at residues 72–99, 114–141, 164–189, 204–231, 252–277, and 306–331; these read FMFL…MMNN, RRYV…KLHR, INFV…TMDK, CLTN…KLNR, DVAY…TISF, and MAVG…VMGF. The 50-residue stretch at 336-385 folds into the FBD domain; that stretch reads WGINFSDVPQCVLSSLEFVEVKAREVADMKKLWSYFMENSTVLKKFTLCL.

This is Putative F-box/FBD/LRR-repeat protein At1g16940 from Arabidopsis thaliana (Mouse-ear cress).